The chain runs to 498 residues: Guanosine-5'-triphosphate,3'-diphosphate pyrophosphatase (498 aa).

It belongs to the GppA/Ppx family. GppA subfamily.

It carries out the reaction guanosine 3'-diphosphate 5'-triphosphate + H2O = guanosine 3',5'-bis(diphosphate) + phosphate + H(+). The protein operates within purine metabolism; ppGpp biosynthesis; ppGpp from GTP: step 2/2. Functionally, catalyzes the conversion of pppGpp to ppGpp. Guanosine pentaphosphate (pppGpp) is a cytoplasmic signaling molecule which together with ppGpp controls the 'stringent response', an adaptive process that allows bacteria to respond to amino acid starvation, resulting in the coordinated regulation of numerous cellular activities. This Serratia proteamaculans (strain 568) protein is Guanosine-5'-triphosphate,3'-diphosphate pyrophosphatase.